Reading from the N-terminus, the 555-residue chain is Genome polyprotein (555 aa).

Residues 1-7 (KHAQRIE) are Extracellular-facing. The helical transmembrane segment at 8-28 (TWILRHPGFTIMAAILAYTIG) threads the bilayer. Residues 29 to 34 (TTHFQR) are Cytoplasmic-facing. A helical transmembrane segment spans residues 35–49 (ALIFILLTAVAPSMT). Topologically, residues 50-494 (MRCIGISNRD…LHQVFGAIYG (445 aa)) are extracellular. 4 disulfide bridges follow: Cys-52–Cys-79, Cys-109–Cys-170, Cys-123–Cys-154, and Cys-141–Cys-165. Residue Asn-116 is glycosylated (N-linked (GlcNAc...) asparagine; by host). The tract at residues 147–160 (DRGWGNGCGLFGKG) is fusion peptide. A glycan (N-linked (GlcNAc...) asparagine; by host) is linked at Asn-202. Cystine bridges form between Cys-234–Cys-334 and Cys-351–Cys-382. The chain crosses the membrane as a helical span at residues 495 to 515 (AAFSGVSWTMKILIGVIITWI). At 516 to 521 (GMNSRS) the chain is on the cytoplasmic side. The helical transmembrane segment at 522–542 (TSLSVSLVLVGIVTLYLEVMV) threads the bilayer. The Extracellular segment spans residues 543–555 (QADSGCVVSWKNK).

In terms of assembly, homodimer; in the endoplasmic reticulum and Golgi. Interacts with protein prM. Interacts with non-structural protein 1. Homodimer; Homohexamer when secreted. Interacts with envelope protein E. In terms of processing, N-glycosylated. Post-translationally, N-glycosylated. The excreted form is glycosylated and this is required for efficient secretion of the protein from infected cells. Specific enzymatic cleavages in vivo yield mature proteins. Cleavages in the lumen of endoplasmic reticulum are performed by host signal peptidase, wereas cleavages in the cytoplasmic side are performed by serine protease NS3. Signal cleavage at the 2K-4B site requires a prior NS3 protease-mediated cleavage at the 4A-2K site.

It is found in the virion membrane. It localises to the host endoplasmic reticulum membrane. The protein resides in the secreted. Functionally, may play a role in virus budding. Exerts cytotoxic effects by activating a mitochondrial apoptotic pathway through M ectodomain. May display a viroporin activity. In terms of biological role, binds to host cell surface receptor and mediates fusion between viral and cellular membranes. Envelope protein is synthesized in the endoplasmic reticulum in the form of heterodimer with protein prM. They play a role in virion budding in the ER, and the newly formed immature particle is covered with 60 spikes composed of heterodimer between precursor prM and envelope protein E. The virion is transported to the Golgi apparatus where the low pH causes dissociation of PrM-E heterodimers and formation of E homodimers. prM-E cleavage is inefficient, and many virions are only partially matured. These uncleaved prM would play a role in immune evasion. Its function is as follows. Involved in immune evasion, pathogenesis and viral replication. Once cleaved off the polyprotein, is targeted to three destinations: the viral replication cycle, the plasma membrane and the extracellular compartment. Essential for viral replication. Required for formation of the replication complex and recruitment of other non-structural proteins to the ER-derived membrane structures. Excreted as a hexameric lipoparticle that plays a role against host immune response. Antagonizing the complement function. Binds to the host macrophages and dendritic cells. Inhibits signal transduction originating from Toll-like receptor 3 (TLR3). Disrupts the host endothelial glycocalyx layer of host pulmonary microvascular endothelial cells, inducing degradation of sialic acid and shedding of heparan sulfate proteoglycans. NS1 induces expression of sialidases, heparanase, and activates cathepsin L, which activates heparanase via enzymatic cleavage. These effects are probably linked to the endothelial hyperpermeability observed in severe dengue disease. The chain is Genome polyprotein from Dengue virus type 2 (strain Thailand/TH-36/1958) (DENV-2).